The following is a 279-amino-acid chain: Large ribosomal subunit protein uL24m (279 aa).

A mitochondrion-targeting transit peptide spans 1–31; the sequence is MRDLRKLIPRLRGPGTNVLKMKKPLPLHMRT. A compositionally biased stretch (basic and acidic residues) spans 34–51; that stretch reads REHLNKSDPTVKDDKSAK. Residues 34 to 56 form a disordered region; it reads REHLNKSDPTVKDDKSAKPELPF. One can recognise a KOW domain in the interval 70-100; sequence KGDYVYVHQGPLKGKWGRVVETNKYTNGITI. The interval 185–204 is disordered; the sequence is PRPKTEDKPKDPEGKLDTKN. Residues 187–202 are compositionally biased toward basic and acidic residues; it reads PKTEDKPKDPEGKLDT.

The protein belongs to the universal ribosomal protein uL24 family. As to quaternary structure, component of the mitochondrial large ribosomal subunit (mt-LSU). Mature yeast 74S mitochondrial ribosomes consist of a small (37S) and a large (54S) subunit. The 37S small subunit contains a 15S ribosomal RNA (15S mt-rRNA) and at least 32 different proteins. The 54S large subunit contains a 21S rRNA (21S mt-rRNA) and at least 45 different proteins. uL24m forms the wall of the exit tunnel.

It localises to the mitochondrion. Functionally, component of the mitochondrial ribosome (mitoribosome), a dedicated translation machinery responsible for the synthesis of mitochondrial genome-encoded proteins, including at least some of the essential transmembrane subunits of the mitochondrial respiratory chain. The mitoribosomes are attached to the mitochondrial inner membrane and translation products are cotranslationally integrated into the membrane. The chain is Large ribosomal subunit protein uL24m (mrpl40) from Schizosaccharomyces pombe (strain 972 / ATCC 24843) (Fission yeast).